An 889-amino-acid polypeptide reads, in one-letter code: Cytoplasmic aconitate hydratase (889 aa).

Residues Gln86 and 205-207 each bind substrate; that span reads DSH. [4Fe-4S] cluster is bound by residues Cys437, Cys503, and Cys506. Substrate is bound by residues Arg536, Arg541, Arg699, and 779–780; that span reads SR.

This sequence belongs to the aconitase/IPM isomerase family. It depends on [4Fe-4S] cluster as a cofactor.

It is found in the cytoplasm. It localises to the cytosol. It carries out the reaction citrate = D-threo-isocitrate. In terms of biological role, bifunctional iron sensor that switches between 2 activities depending on iron availability. Iron deprivation, promotes its mRNA binding activity through which it regulates the expression of genes involved in iron uptake, sequestration and utilization. Binds to iron-responsive elements (IRES) in the untranslated region of target mRNAs preventing for instance the translation of ferritin and aminolevulinic acid synthase and stabilizing the transferrin receptor mRNA. Conversely, when cellular iron levels are high, binds a 4Fe-4S cluster which precludes RNA binding activity and promotes the aconitase activity, the isomerization of citrate to isocitrate via cis-aconitate. This is Cytoplasmic aconitate hydratase (ACO1) from Gallus gallus (Chicken).